Consider the following 75-residue polypeptide: Protease B inhibitor 2 (75 aa).

The residue at position 74 (Thr74) is a Phosphothreonine.

This sequence belongs to the protease inhibitor I9 family. Part of the heterodimeric LMA1 complex together with the thioredoxin II/TRX2. LMA1 binds to the ATPase SEC18.

It is found in the cytoplasm. Cytosolic inhibitor of vacuolar proteinase B (yscB), probably regulating protease B activity during limited proteolysis. PBI2 is a component of the LMA1 complex, which is involved in the facilitation of vesicle fusion such as homotypic vacuole and ER-derived COPII vesicle fusion with the Golgi. The protein is Protease B inhibitor 2 (PBI2) of Saccharomyces cerevisiae (strain ATCC 204508 / S288c) (Baker's yeast).